Consider the following 132-residue polypeptide: Translation initiation factor 5A (132 aa).

Lys-36 bears the Hypusine mark.

The protein belongs to the eIF-5A family.

It is found in the cytoplasm. Functionally, functions by promoting the formation of the first peptide bond. The protein is Translation initiation factor 5A of Methanosphaera stadtmanae (strain ATCC 43021 / DSM 3091 / JCM 11832 / MCB-3).